A 187-amino-acid chain; its full sequence is Peptidyl-tRNA hydrolase (187 aa).

Residue Y14 participates in tRNA binding. H19 (proton acceptor) is an active-site residue. TRNA-binding residues include Y64, N66, and N112.

Belongs to the PTH family. In terms of assembly, monomer.

It localises to the cytoplasm. It catalyses the reaction an N-acyl-L-alpha-aminoacyl-tRNA + H2O = an N-acyl-L-amino acid + a tRNA + H(+). Hydrolyzes ribosome-free peptidyl-tRNAs (with 1 or more amino acids incorporated), which drop off the ribosome during protein synthesis, or as a result of ribosome stalling. Functionally, catalyzes the release of premature peptidyl moieties from peptidyl-tRNA molecules trapped in stalled 50S ribosomal subunits, and thus maintains levels of free tRNAs and 50S ribosomes. The polypeptide is Peptidyl-tRNA hydrolase (Bdellovibrio bacteriovorus (strain ATCC 15356 / DSM 50701 / NCIMB 9529 / HD100)).